The chain runs to 70 residues: Cold shock-like protein CspA (70 aa).

The CSD domain maps to 7 to 67 (GSVKWFNETK…GKKGPQAAQV (61 aa)).

The protein localises to the cytoplasm. This is Cold shock-like protein CspA (cspA) from Vibrio cholerae serotype O1 (strain ATCC 39315 / El Tor Inaba N16961).